Consider the following 37-residue polypeptide: MKVRASVKKICEKCRVIRRRGRVMVICVNPKHKQRQG.

The protein belongs to the bacterial ribosomal protein bL36 family.

The protein is Large ribosomal subunit protein bL36 of Trichodesmium erythraeum (strain IMS101).